Here is a 114-residue protein sequence, read N- to C-terminus: Hydrogenase maturation factor HypA (114 aa).

H2 serves as a coordination point for Ni(2+). The Zn(2+) site is built by C73, C76, C89, and C92.

It belongs to the HypA/HybF family.

Involved in the maturation of [NiFe] hydrogenases. Required for nickel insertion into the metal center of the hydrogenase. This chain is Hydrogenase maturation factor HypA, found in Azoarcus sp. (strain BH72).